Consider the following 334-residue polypeptide: G-protein coupled receptor 12 (334 aa).

Topologically, residues 1–48 (MNEDPKVNLSGLPRDCIDAGAPENISAAVPSQGSVAESEPELVVNPWD) are extracellular. N-linked (GlcNAc...) asparagine glycosylation is found at N8 and N24. Residues 49–69 (IVLCSSGTLICCENAVVVLII) traverse the membrane as a helical segment. Over 70–78 (FHSPSLRAP) the chain is Cytoplasmic. The helical transmembrane segment at 79-99 (MFLLIGSLALADLLAGLGLII) threads the bilayer. Residues 100–113 (NFVFAYLLQSEATK) lie on the Extracellular side of the membrane. The chain crosses the membrane as a helical span at residues 114-134 (LVTIGLIVASFSASVCSLLAI). The Cytoplasmic segment spans residues 135–158 (TVDRYLSLYYALTYHSERTVTFTY). The helical transmembrane segment at 159–179 (VMLVMLWGTSICLGLLPVMGW) threads the bilayer. Residues 180–199 (NCLRDESTCSVVRPLTKNNA) lie on the Extracellular side of the membrane. A helical transmembrane segment spans residues 200-220 (AILSISFLFMFALMLQLYIQI). At 221-252 (CKIVMRHAHQIALQHHFLATSHYVTTRKGVST) the chain is on the cytoplasmic side. Residues 253-273 (LALILGTFAACWMPFTLYSLI) form a helical membrane-spanning segment. The Extracellular portion of the chain corresponds to 274-282 (ADYTYPSIY). A helical transmembrane segment spans residues 283–303 (TYATLLPATYNSIINPVIYAF). The Cytoplasmic portion of the chain corresponds to 304–334 (RNQEIQKALCLICCGCIPSSLSQRARSPSDV). Residue C317 is the site of S-palmitoyl cysteine attachment. Phosphoserine is present on residues S330 and S332.

Belongs to the G-protein coupled receptor 1 family. Expressed predominantly in the forebrain and a lesser extent in the hindbrain. Lower expression in the liver.

It is found in the cell membrane. Its function is as follows. Receptor with constitutive G(s) signaling activity that stimulates cyclic AMP production. Promotes neurite outgrowth and blocks myelin inhibition in neurons. This chain is G-protein coupled receptor 12 (Gpr12), found in Mus musculus (Mouse).